A 253-amino-acid chain; its full sequence is HTH-type transcriptional regulator YdeO (253 aa).

An HTH araC/xylS-type domain is found at 137–233 (GKVRNIVNMK…GNSPKRVSKE (97 aa)). 2 DNA-binding regions (H-T-H motif) span residues 154 to 175 (KDIC…KQEQ) and 200 to 223 (VNKI…RKHF).

Its function is as follows. Induces the expression of gadE and mdtEF. Could also regulate the expression of other genes involved in acid resistance. In Escherichia coli O157:H7, this protein is HTH-type transcriptional regulator YdeO.